The primary structure comprises 238 residues: Ribonuclease PH (238 aa).

Phosphate is bound by residues R86 and 124 to 126; that span reads GTR.

This sequence belongs to the RNase PH family. As to quaternary structure, homohexameric ring arranged as a trimer of dimers.

It carries out the reaction tRNA(n+1) + phosphate = tRNA(n) + a ribonucleoside 5'-diphosphate. Phosphorolytic 3'-5' exoribonuclease that plays an important role in tRNA 3'-end maturation. Removes nucleotide residues following the 3'-CCA terminus of tRNAs; can also add nucleotides to the ends of RNA molecules by using nucleoside diphosphates as substrates, but this may not be physiologically important. Probably plays a role in initiation of 16S rRNA degradation (leading to ribosome degradation) during starvation. This chain is Ribonuclease PH, found in Salmonella gallinarum (strain 287/91 / NCTC 13346).